The sequence spans 939 residues: U3 small nucleolar RNA-associated protein 21 (939 aa).

Residue Ser2 is modified to N-acetylserine. WD repeat units lie at residues 40 to 71, 81 to 111, 119 to 158, 168 to 201, 208 to 245, 252 to 287, 295 to 347, 354 to 388, 415 to 454, 463 to 497, 505 to 541, 546 to 581, 583 to 624, and 626 to 664; these read ATGT…LLFV, VALS…HLLE, EHLC…TKLT, VSLQ…LVFT, QITT…RTIK, SSLS…IHVL, YGGV…RSRG, SYIA…QSQE, VALA…GRWT, VKSV…LRKK, VTGI…GKLK, ITAM…VRQL, GHSN…DGII, and DNVA…KTVS. Ser772 is modified (phosphoserine).

In terms of assembly, interacts with snoRNA U3. Interacts with MPP10. Interacts (via WD repeats) with UTP18. Component of the ribosomal small subunit (SSU) processome composed of at least 40 protein subunits and snoRNA U3.

Its subcellular location is the nucleus. It localises to the nucleolus. Involved in nucleolar processing of pre-18S ribosomal RNA and ribosome assembly. The polypeptide is U3 small nucleolar RNA-associated protein 21 (UTP21) (Saccharomyces cerevisiae (strain ATCC 204508 / S288c) (Baker's yeast)).